Consider the following 308-residue polypeptide: MTSKLEQLKQFTTVVADTGDIDAIARLKPVDATTNPSLLLKAAAMPRYAEHLGNAMKQCQGDIGLACDLFAVAVGKQILELIPGRISTEVDARLSFDTQAMVQRGERLIGLYEQAGISRERVLIKIASTWEGIRAAEQLEKAGIQTNLTLLFSFTQAVACAEAGVFLISPFVGRIYDWYKKHEGRDYQGAEDPGVQSVSRIYDYYKTHGYKTVVMGASFRNVGQIESLAGCDRLTISPELLGQLAEASGTLERKLEPGRASEPRISLDEKSFRWGLNEDAMATEKLAEGIRQFARDQEKLEALLTELA.

K125 functions as the Schiff-base intermediate with substrate in the catalytic mechanism.

Belongs to the transaldolase family. Type 1 subfamily. As to quaternary structure, homodimer.

The protein localises to the cytoplasm. It carries out the reaction D-sedoheptulose 7-phosphate + D-glyceraldehyde 3-phosphate = D-erythrose 4-phosphate + beta-D-fructose 6-phosphate. It functions in the pathway carbohydrate degradation; pentose phosphate pathway; D-glyceraldehyde 3-phosphate and beta-D-fructose 6-phosphate from D-ribose 5-phosphate and D-xylulose 5-phosphate (non-oxidative stage): step 2/3. Its function is as follows. Transaldolase is important for the balance of metabolites in the pentose-phosphate pathway. This Stutzerimonas stutzeri (strain A1501) (Pseudomonas stutzeri) protein is Transaldolase.